The sequence spans 456 residues: tRNA modification GTPase MnmE (456 aa).

(6S)-5-formyl-5,6,7,8-tetrahydrofolate-binding residues include arginine 24, glutamate 81, and lysine 120. Residues 216–379 (GMTVVIAGRP…LREHLKACMG (164 aa)) form the TrmE-type G domain. Asparagine 226 lines the K(+) pocket. Residues 226 to 231 (NAGKSS), 245 to 251 (TEIAGTT), 270 to 273 (DTAG), 335 to 338 (NKAD), and 359 to 361 (SAR) contribute to the GTP site. Serine 230 contacts Mg(2+). Residues threonine 245, isoleucine 247, and threonine 250 each contribute to the K(+) site. Threonine 251 contacts Mg(2+). Position 456 (lysine 456) interacts with (6S)-5-formyl-5,6,7,8-tetrahydrofolate.

Belongs to the TRAFAC class TrmE-Era-EngA-EngB-Septin-like GTPase superfamily. TrmE GTPase family. In terms of assembly, homodimer. Heterotetramer of two MnmE and two MnmG subunits. Requires K(+) as cofactor.

It is found in the cytoplasm. Functionally, exhibits a very high intrinsic GTPase hydrolysis rate. Involved in the addition of a carboxymethylaminomethyl (cmnm) group at the wobble position (U34) of certain tRNAs, forming tRNA-cmnm(5)s(2)U34. The sequence is that of tRNA modification GTPase MnmE from Pseudomonas syringae pv. tomato (strain ATCC BAA-871 / DC3000).